Here is a 237-residue protein sequence, read N- to C-terminus: uncharacterized protein (237 aa).

A signal peptide spans 1–28 (MVFSFSTFNRLVTFTVMAAIVSVRPLTA).

This is an uncharacterized protein from Sinorhizobium fredii (strain NBRC 101917 / NGR234).